The following is a 719-amino-acid chain: Solute carrier organic anion transporter family member 6A1 (719 aa).

Residues 1–46 are disordered; the sequence is MFVGVARHSGSQDEVSRGVEPLEAARAQPAKDRRAKGTPKSSKPGK. Topologically, residues 1-106 are cytoplasmic; the sequence is MFVGVARHSG…TCCECCNNIR (106 aa). The span at 33-46 shows a compositional bias: basic residues; sequence RRAKGTPKSSKPGK. Residues 107–126 traverse the membrane as a helical segment; the sequence is CFMIFYCILLICQGVVFGLI. The Extracellular segment spans residues 127–145; it reads DVSIGDFQKEYQLKTIEKL. Residues 146 to 166 traverse the membrane as a helical segment; it reads ALEKSYDISSGLVAIFIAFYG. The Cytoplasmic portion of the chain corresponds to 167–171; that stretch reads DRKKV. Residues 172–196 traverse the membrane as a helical segment; it reads IWFVASSFLIGLGSLLCAFPSINEE. Residues 197–223 lie on the Extracellular side of the membrane; that stretch reads NKQSKVGIEDICEEIKVVSGCQSSGIS. Residues 224–254 form a helical membrane-spanning segment; sequence FQSKYLSFFILGQTVQGIAGMPLYILGITFI. The Cytoplasmic segment spans residues 255-274; it reads DENVATHSAGIYLGIAECTS. A helical membrane pass occupies residues 275 to 295; that stretch reads MIGYALGYVLGAPLVKVPENT. At 296–311 the chain is on the extracellular side; it reads TSATNTTVNNGSPEWL. Asn-300 carries an N-linked (GlcNAc...) asparagine glycan. A helical transmembrane segment spans residues 312 to 336; the sequence is WTWWINFLFAAVVAWCTLIPLSCFP. Over 337–378 the chain is Cytoplasmic; it reads NNMPGSTRIKARKRKQLHFFDSRLKDLKLGTNIKDLCAALWI. The helical transmembrane segment at 379–400 threads the bilayer; the sequence is LMKNPVLICLALSKATEYLVII. The Extracellular portion of the chain corresponds to 401-420; the sequence is GASEFLPIYLENQFILTPTV. A helical membrane pass occupies residues 421 to 444; it reads ATTLAGLVLIPGGALGQLLGGVIV. Residues 445-448 lie on the Cytoplasmic side of the membrane; sequence STLE. Residues 449–472 traverse the membrane as a helical segment; sequence MSCKALMRFIMVTSVISLILLVFI. Residues 473–581 lie on the Extracellular side of the membrane; it reads IFVRCNPVQF…DAKCYKLPLF (109 aa). Residues 496-551 form the Kazal-like domain; the sequence is GNLTAPCNEKCRCSSSIYSSICGRDDIEYFSPCFAGCTYSKAQNQKKMYYNCSCIK. Asn-497 carries an N-linked (GlcNAc...) asparagine glycan. Disulfide bonds link Cys-502/Cys-532, Cys-508/Cys-528, and Cys-517/Cys-549. N-linked (GlcNAc...) asparagine glycosylation is present at Asn-546. A helical transmembrane segment spans residues 582 to 604; the sequence is IAFIFSTLIFSGFSGVPIVLAMT. Residues 605–613 lie on the Cytoplasmic side of the membrane; sequence RVVPDKLRS. The chain crosses the membrane as a helical span at residues 614–639; the sequence is LALGVSYVILRIFGTIPGPSIFKMSG. Residues 640–673 lie on the Extracellular side of the membrane; the sequence is ETSCILRDVNKCGHTGRCWIYNKTKMAFLLVGIC. Residue Asn-661 is glycosylated (N-linked (GlcNAc...) asparagine). A helical transmembrane segment spans residues 674 to 691; the sequence is FLCKLCTIIFTTIAFFIY. Over 692 to 719 the chain is Cytoplasmic; sequence KRRLNENTDFPDVTVKNPKVKKKEETDL.

It belongs to the organo anion transporter (TC 2.A.60) family. As to expression, strongly expressed in testis. Weakly expressed in spleen, brain, fetal brain and placenta. Detected in lung tumors.

Its subcellular location is the cell membrane. This is Solute carrier organic anion transporter family member 6A1 (SLCO6A1) from Homo sapiens (Human).